A 331-amino-acid chain; its full sequence is WW domain-containing protein C2F3.14c (331 aa).

The interval 1-184 (MSSSKDCKAT…TNENQAQPSI (184 aa)) is disordered. Over residues 9 to 22 (ATSNVDQTIPASNV) the composition is skewed to polar residues. Positions 23 to 41 (NSGDFISSNTSSSNSENSN) are enriched in low complexity. The segment covering 57 to 89 (SFISENTPKNTFESTQTYENLESISKNEPTSEA) has biased composition (polar residues). The segment covering 105-145 (REPPLPNEPVPEEPLPGEPPLPDEPVPEEPLPGEPPLPNEP) has biased composition (pro residues). The span at 158 to 184 (SDETVSETSKNDTSNSPTNENQAQPSI) shows a compositional bias: polar residues. The region spanning 187-220 (SEGHRIAAIWDPSQQAYYFWDTLTNTTSWNNPLE) is the WW domain. The interval 290-309 (YTRKEMEQMKRRTKEKKEMK) is disordered. Residues 292–309 (RKEMEQMKRRTKEKKEMK) are compositionally biased toward basic and acidic residues.

Its subcellular location is the nucleus. In Schizosaccharomyces pombe (strain 972 / ATCC 24843) (Fission yeast), this protein is WW domain-containing protein C2F3.14c.